The chain runs to 808 residues: Leucine--tRNA ligase (808 aa).

Residues 40–51 (PYPSGQGLHVGH) carry the 'HIGH' region motif. The 'KMSKS' region motif lies at 580-584 (KMSKS). Lys-583 provides a ligand contact to ATP.

The protein belongs to the class-I aminoacyl-tRNA synthetase family.

The protein resides in the cytoplasm. The catalysed reaction is tRNA(Leu) + L-leucine + ATP = L-leucyl-tRNA(Leu) + AMP + diphosphate. The polypeptide is Leucine--tRNA ligase (Leuconostoc mesenteroides subsp. mesenteroides (strain ATCC 8293 / DSM 20343 / BCRC 11652 / CCM 1803 / JCM 6124 / NCDO 523 / NBRC 100496 / NCIMB 8023 / NCTC 12954 / NRRL B-1118 / 37Y)).